Here is a 112-residue protein sequence, read N- to C-terminus: Larval cuticle protein 3 (112 aa).

An N-terminal signal peptide occupies residues 1–16; it reads MFKILLVCSLAALVAA. Residues 31 to 92 enclose the Chitin-binding type R&amp;R domain; that stretch reads PDGFVSKLVL…PQSDLLPTPP (62 aa).

Its function is as follows. Component of the larval cuticle. This is Larval cuticle protein 3 (Lcp3) from Drosophila melanogaster (Fruit fly).